A 55-amino-acid chain; its full sequence is Neurotoxin B-II (55 aa).

At proline 10 the chain carries Hydroxyproline. 4 disulfides stabilise this stretch: cysteine 12–cysteine 48, cysteine 16–cysteine 52, cysteine 23–cysteine 41, and cysteine 26–cysteine 37.

This sequence belongs to the worm B-toxin family.

The protein localises to the secreted. This toxin increases the excitability of nerves by delaying the inactivation of the voltage-gated sodium channel (Nav). Only acts on some crustacean. Neurotoxin B-II is less abundant, but 15-fold more toxic than neurotoxin B-VI. The protein is Neurotoxin B-II of Cerebratulus lacteus (Milky ribbon worm).